A 130-amino-acid polypeptide reads, in one-letter code: S-protein homolog 22 (130 aa).

Positions 1-21 (MKYFTIFFIFFSLCMFGHVSG) are cleaved as a signal peptide.

This sequence belongs to the plant self-incompatibility (S1) protein family.

It localises to the secreted. The polypeptide is S-protein homolog 22 (Arabidopsis thaliana (Mouse-ear cress)).